The chain runs to 316 residues: Petrobactin import system permease protein YclN (316 aa).

A run of 8 helical transmembrane segments spans residues 5–25 (YLFILLIILAVTSVFIGVEDL), 49–69 (LISIVIAGLSMSICGLIMQQI), 94–114 (LLLFTSASPLIKMLVAFVFAL), 133–153 (IFIPLVGLMLGNIVSSIATFI), 181–201 (LLYLSIPLVIIAYVYADKFTL), 224–244 (LIIVSLITSLVILTVGMLPFL), 268–288 (VLLGAVFVLFCDILGRIIIFP), and 290–310 (EISIGLMVGIIGSGIFLFMLL).

The protein belongs to the binding-protein-dependent transport system permease family. FecCD subfamily. In terms of assembly, the complex is composed of two ATP-binding proteins (YclP), two transmembrane proteins (YclN and YclO) and a solute-binding protein (YclQ).

Its subcellular location is the cell membrane. Part of the ABC transporter complex YclNOPQ involved in uptake of ferric-petrobactin. Petrobactin is a photoreactive 3,4-catecholate siderophore produced by many members of the B.cereus group, including B.anthracis. Probably responsible for the translocation of the substrate across the membrane. This is Petrobactin import system permease protein YclN (yclN) from Bacillus subtilis (strain 168).